An 833-amino-acid chain; its full sequence is Interleukin enhancer-binding factor 3 homolog (833 aa).

The 369-residue stretch at 11 to 379 (RIFVNDDRHV…PMKRPIEEES (369 aa)) folds into the DZF domain. Disordered stretches follow at residues 65-86 (VNAL…GEQA) and 339-403 (DPLP…KAEP). Phosphothreonine is present on Thr-70. Positions 373-385 (RPIEEESTDEKNP) are enriched in basic and acidic residues. 2 DRBM domains span residues 402–471 (EPAQ…DMGL) and 527–593 (HGKN…KLFP). 3 disordered regions span residues 597–651 (NSEV…FNQG), 702–762 (QSDS…GGGA), and 775–833 (AYPS…YQYR). A compositionally biased stretch (basic residues) spans 629–639 (GRGRGRGRGRG). Over residues 640-651 (RGFNNGGGFNQG) the composition is skewed to gly residues. The span at 775–818 (AYPSQVTGGQEYNYEGYSNQSNYNSQGGANQNFGGNSAPYNSGQ) shows a compositional bias: polar residues.

Its subcellular location is the nucleus. The protein localises to the nucleolus. The protein resides in the cytoplasm. Its function is as follows. RNA-binding protein that plays an essential role in the biogenesis of circular RNAs (circRNAs) which are produced by back-splicing circularization of pre-mRNAs. Within the nucleus, promotes circRNAs processing by stabilizing the regulatory elements residing in the flanking introns of the circularized exons. Plays thereby a role in the back-splicing of a subset of circRNAs. As a consequence, participates in a wide range of transcriptional and post-transcriptional processes. Binds to poly-U elements and AU-rich elements (AREs) in the 3'-UTR of target mRNAs. Upon viral infection, ILF3 accumulates in the cytoplasm and participates in the innate antiviral response. Mechanistically, ILF3 becomes phosphorylated and activated by the double-stranded RNA-activated protein kinase/PKR which releases ILF3 from cellular mature circRNAs. In turn, unbound ILF3 molecules are able to interact with and thus inhibit viral mRNAs. In Danio rerio (Zebrafish), this protein is Interleukin enhancer-binding factor 3 homolog (ilf3).